The chain runs to 495 residues: uncharacterized protein (495 aa).

A compositionally biased stretch (low complexity) spans 305–317; it reads DYNNNNNENYSGS. The interval 305–404 is disordered; that stretch reads DYNNNNNENY…LDEEDNRKNK (100 aa). Acidic residues predominate over residues 335–347; it reads YDNDENNDDENND. Positions 348-363 are enriched in low complexity; sequence ENNNNNNNNNNNNNNN. The span at 386–398 shows a compositional bias: acidic residues; the sequence is SDDDEADNELDEE.

This is an uncharacterized protein from Dictyostelium discoideum (Social amoeba).